Here is a 95-residue protein sequence, read N- to C-terminus: Small ribosomal subunit protein bS6 (95 aa).

It belongs to the bacterial ribosomal protein bS6 family.

Functionally, binds together with bS18 to 16S ribosomal RNA. This chain is Small ribosomal subunit protein bS6, found in Corynebacterium jeikeium (strain K411).